Here is a 123-residue protein sequence, read N- to C-terminus: Putative iron-sulfur cluster insertion protein ErpA (123 aa).

3 residues coordinate iron-sulfur cluster: Cys-51, Cys-115, and Cys-117.

The protein belongs to the HesB/IscA family. Homodimer. Iron-sulfur cluster is required as a cofactor.

In terms of biological role, required for insertion of 4Fe-4S clusters. In Bordetella bronchiseptica (strain ATCC BAA-588 / NCTC 13252 / RB50) (Alcaligenes bronchisepticus), this protein is Putative iron-sulfur cluster insertion protein ErpA.